Reading from the N-terminus, the 1230-residue chain is Basic-leucine zipper transcription factor A (1230 aa).

Disordered stretches follow at residues 65–108, 180–233, 270–310, and 422–578; these read LYLS…NIIN, LNGN…QQHQ, QQLK…PSTQ, and HQQN…RKKD. Composition is skewed to low complexity over residues 69–108, 192–233, 270–287, 295–310, and 422–447; these read NSSN…NIIN, NNFS…QQHQ, QQLK…SPQP, PSLQ…PSTQ, and HQQN…QQQH. Composition is skewed to polar residues over residues 448-458 and 466-475; these read KSTPPTQNTPP and TPTLTTNGKG. Positions 476–503 are enriched in low complexity; the sequence is SKSTPPTTTTTTTTTTSSSSSSSSSSSS. Positions 523 to 537 are enriched in basic residues; the sequence is PHHHHHHHNNHHHHH. Acidic residues predominate over residues 541 to 554; sequence FSDENDEEFIDENE. The region spanning 555–618 is the bZIP domain; the sequence is DKSKNKSRSS…LGDVMRPDFD (64 aa). Residues 556–586 are basic motif; sequence KSKNKSRSSQNIASRNYRQRKKDHISEVEFK. Over residues 562–571 the composition is skewed to polar residues; the sequence is RSSQNIASRN. Residues 590–604 form a leucine-zipper region; it reads LSLENERLKQENHLL. Residues 728–753 are a coiled coil; sequence LKIDMELRTERDQLDREIKELFLKKI. 2 disordered regions span residues 772 to 869 and 1025 to 1230; these read TFNS…EHNK and NYTN…TPNI. 2 stretches are compositionally biased toward low complexity: residues 774 to 803 and 810 to 831; these read NSES…IITP and NNQN…SNNN. The segment covering 832–845 has biased composition (basic residues); it reads SHHHHHHHHSHLHG. Residues 1025–1042 show a composition bias toward polar residues; the sequence is NYTNSPLITSSPSQLTPN. Composition is skewed to low complexity over residues 1052-1146 and 1153-1193; these read NNNN…NNGN and QALH…SPSS.

Belongs to the bZIP family. In terms of assembly, binds DNA as a dimer. Heterodimerizes with dimB; in vitro. Also able to form homodimer; in vitro.

It localises to the nucleus. Its function is as follows. Transcriptional regulator involved in DIF-1 signaling. DIF-1 (Differentiation Inducing Factor-1) is a signal molecule involved in the differentiation of pstO (prestalk-O) cells. Functions both as an activator of prestalk gene expression and a repressor of prespore gene expression. The sequence is that of Basic-leucine zipper transcription factor A (dimA) from Dictyostelium discoideum (Social amoeba).